The sequence spans 222 residues: UPF0758 protein Lcho_0695 (222 aa).

Positions 100–222 (VFDSPQAVRD…VVSFAERGLL (123 aa)) constitute an MPN domain. His171, His173, and Asp184 together coordinate Zn(2+). The JAMM motif motif lies at 171–184 (HNHPSGVAEPSRAD).

Belongs to the UPF0758 family.

The polypeptide is UPF0758 protein Lcho_0695 (Leptothrix cholodnii (strain ATCC 51168 / LMG 8142 / SP-6) (Leptothrix discophora (strain SP-6))).